Reading from the N-terminus, the 210-residue chain is Na(+)-translocating NADH-quinone reductase subunit D (210 aa).

The next 6 helical transmembrane spans lie at 10–30 (VLIG…GVCS), 42–62 (LVMT…ISLI), 72–92 (IIVQ…VLQA), 103–123 (VFVG…AYAM), 131–151 (FMDG…VGFV), and 178–198 (NGLL…IWII).

It belongs to the NqrDE/RnfAE family. Composed of six subunits; NqrA, NqrB, NqrC, NqrD, NqrE and NqrF.

It localises to the cell inner membrane. The enzyme catalyses a ubiquinone + n Na(+)(in) + NADH + H(+) = a ubiquinol + n Na(+)(out) + NAD(+). NQR complex catalyzes the reduction of ubiquinone-1 to ubiquinol by two successive reactions, coupled with the transport of Na(+) ions from the cytoplasm to the periplasm. NqrA to NqrE are probably involved in the second step, the conversion of ubisemiquinone to ubiquinol. In Shewanella pealeana (strain ATCC 700345 / ANG-SQ1), this protein is Na(+)-translocating NADH-quinone reductase subunit D.